We begin with the raw amino-acid sequence, 62 residues long: MAQVCDMCGKGPQFGNNISHAHNVTKRRWNVNLRPVRAKVNGATKRMRVCTTCLRSGKLVKA.

This sequence belongs to the bacterial ribosomal protein bL28 family.

In Koribacter versatilis (strain Ellin345), this protein is Large ribosomal subunit protein bL28.